The following is a 198-amino-acid chain: Holliday junction resolvase RecU (198 aa).

Residues 1-21 form a disordered region; the sequence is MVNYPHKLSSQKRQPSLSQPK. Over residues 11-21 the composition is skewed to polar residues; that stretch reads QKRQPSLSQPK. The Mg(2+) site is built by Thr81, Asp83, Glu96, and Gln115.

This sequence belongs to the RecU family. Mg(2+) serves as cofactor.

Its subcellular location is the cytoplasm. It carries out the reaction Endonucleolytic cleavage at a junction such as a reciprocal single-stranded crossover between two homologous DNA duplexes (Holliday junction).. In terms of biological role, endonuclease that resolves Holliday junction intermediates in genetic recombination. Cleaves mobile four-strand junctions by introducing symmetrical nicks in paired strands. Promotes annealing of linear ssDNA with homologous dsDNA. Required for DNA repair, homologous recombination and chromosome segregation. In Streptococcus pneumoniae (strain ATCC 700669 / Spain 23F-1), this protein is Holliday junction resolvase RecU.